A 640-amino-acid polypeptide reads, in one-letter code: uncharacterized protein (640 aa).

14 consecutive transmembrane segments (helical) span residues 8–28 (GGVV…LGMF), 52–72 (LGGF…CYLI), 90–110 (LFVA…FLLA), 136–156 (LWYA…LVVL), 179–199 (VFML…LHAW), 208–228 (PSPV…YGIV), 241–261 (WWGL…VLQA), 277–297 (ENMG…DTGA), 298–318 (YGPA…HAAF), 352–372 (TVFF…AGFV), 391–411 (IVAL…GLSV), 446–466 (AIAA…APMV), 497–517 (IAPG…AVLA), and 619–639 (GSVH…LVVA).

It belongs to the complex I subunit 4 family.

The protein localises to the cell membrane. This is an uncharacterized protein from Mycobacterium tuberculosis (strain CDC 1551 / Oshkosh).